A 596-amino-acid polypeptide reads, in one-letter code: Jacalin-related lectin 46 (596 aa).

The tract at residues 1–20 (MTERSEALGKDGNRRWDDKS) is disordered. 4 Jacalin-type lectin domains span residues 2 to 143 (TERS…YFTR), 146 to 291 (PTRI…YFTP), 294 to 439 (PTKS…HFYP), and 446 to 592 (AEKL…HVLP).

It belongs to the jacalin lectin family.

This is Jacalin-related lectin 46 (JAL46) from Arabidopsis thaliana (Mouse-ear cress).